Here is a 199-residue protein sequence, read N- to C-terminus: Cytochrome c oxidase assembly protein CtaG (199 aa).

Residues 1 to 12 are Cytoplasmic-facing; sequence MTNTPQTPPKER. Residues 13–35 traverse the membrane as a helical; Signal-anchor for type II membrane protein segment; the sequence is ANGVIVGACLAFVAGMVGMAYAA. Residues 36–199 lie on the Periplasmic side of the membrane; it reads VPLYDMFCRV…VKDGETENRL (164 aa).

The protein belongs to the COX11/CtaG family.

The protein resides in the cell inner membrane. Exerts its effect at some terminal stage of cytochrome c oxidase synthesis, probably by being involved in the insertion of the copper B into subunit I. This chain is Cytochrome c oxidase assembly protein CtaG, found in Sinorhizobium fredii (strain NBRC 101917 / NGR234).